The chain runs to 338 residues: Glyceraldehyde-3-phosphate dehydrogenase (338 aa).

NAD(+)-binding positions include 13 to 14 (RI), Asp35, and Arg80. D-glyceraldehyde 3-phosphate-binding positions include 151 to 153 (SCT), Thr182, 211 to 212 (TG), and Arg234. Cys152 acts as the Nucleophile in catalysis. Asn316 serves as a coordination point for NAD(+).

It belongs to the glyceraldehyde-3-phosphate dehydrogenase family. In terms of assembly, homotetramer.

It is found in the cytoplasm. It carries out the reaction D-glyceraldehyde 3-phosphate + phosphate + NAD(+) = (2R)-3-phospho-glyceroyl phosphate + NADH + H(+). Its pathway is carbohydrate degradation; glycolysis; pyruvate from D-glyceraldehyde 3-phosphate: step 1/5. In Sclerotinia sclerotiorum (White mold), this protein is Glyceraldehyde-3-phosphate dehydrogenase (GPD).